The primary structure comprises 550 residues: Retron Ec78 probable ATPase (550 aa).

Residues 93–100 (GNNGKGKT) carry the ATP-binding motif.

Its function is as follows. Probable ATPase component of antiviral defense system retron Ec78, composed of a non-coding RNA (ncRNA), a reverse transcriptase (RT), this protein and a putative HNH endonuclease. Expression of retron Ec78 confers protection against bacteriophage T5. At multiplicity of infection (MOI) of 0.02 cultures slow growth when infected with T5 but do not collapse, at MOI 2 cultures enter growth stasis. In Escherichia coli, this protein is Retron Ec78 probable ATPase.